Reading from the N-terminus, the 215-residue chain is Porin MspB (215 aa).

The N-terminal stretch at 1–31 (MTAFKRVLIAMISALLAGTTGMFVSAGAAHA) is a signal peptide.

This sequence belongs to the mycobacterial porin (TC 1.B.24) family. As to quaternary structure, octamers. Probably forms a goblet with the wide end on the exterior of the outer membrane and a central channel. It is not known if mixed oligomers of MspB with other Msp subunits form in vivo.

The protein resides in the cell outer membrane. It is found in the secreted. The protein localises to the cell wall. In terms of biological role, a backup porin induced when MspA, the major porin, is deleted. Probably forms a water-filled channel which favors the permeation of cations. There are about 2400 porins in wild-type, 800 in an mspA deletion and 150 in a double mspA-mspC deletion. A triple mspA-mspC-mspD deletion mutant has low but detectable channel activity. Different conductance values with maxima at 2.3 and 4.6 nanosiemens might be caused by a simultaneous reconstitution of MspB channels into the membrane or by the existence of different MspB conformations. This Mycolicibacterium smegmatis (strain ATCC 700084 / mc(2)155) (Mycobacterium smegmatis) protein is Porin MspB (mspB).